Reading from the N-terminus, the 447-residue chain is Argininosuccinate synthase (447 aa).

ATP is bound by residues 17 to 25 and A43; that span reads AFSGGLDTS. Residue Y99 participates in L-citrulline binding. 2 residues coordinate ATP: G129 and T131. Positions 131, 135, and 136 each coordinate L-aspartate. L-citrulline is bound at residue N135. Position 136 (D136) interacts with ATP. R139 and S192 together coordinate L-citrulline. Position 194 (D194) interacts with ATP. T201, E203, and E280 together coordinate L-citrulline.

This sequence belongs to the argininosuccinate synthase family. Type 2 subfamily. Homotetramer.

It is found in the cytoplasm. The catalysed reaction is L-citrulline + L-aspartate + ATP = 2-(N(omega)-L-arginino)succinate + AMP + diphosphate + H(+). The protein operates within amino-acid biosynthesis; L-arginine biosynthesis; L-arginine from L-ornithine and carbamoyl phosphate: step 2/3. The chain is Argininosuccinate synthase from Escherichia coli O8 (strain IAI1).